A 904-amino-acid polypeptide reads, in one-letter code: DNA polymerase I (904 aa).

The 94-residue stretch at 186–279 (TPRQYPDFAA…DTLRLQPWDR (94 aa)) folds into the 5'-3' exonuclease domain. One can recognise a 3'-5' exonuclease domain in the interval 317-493 (RGGALAPGTV…LADALDAELA (177 aa)).

The protein belongs to the DNA polymerase type-A family. As to quaternary structure, single-chain monomer with multiple functions.

The catalysed reaction is DNA(n) + a 2'-deoxyribonucleoside 5'-triphosphate = DNA(n+1) + diphosphate. Its function is as follows. In addition to polymerase activity, this DNA polymerase exhibits 3'-5' and 5'-3' exonuclease activity. The polypeptide is DNA polymerase I (polA) (Mycobacterium bovis (strain ATCC BAA-935 / AF2122/97)).